Here is a 606-residue protein sequence, read N- to C-terminus: NADH-ubiquinone oxidoreductase chain 5 (606 aa).

Helical transmembrane passes span 4–24 (FSSLMLASLSVLTLPIMSSIL), 38–58 (NIISYAFITSLIPTMMFIHSG), 87–107 (MIFVPVALFVTWSIMEFSLWY), 117–137 (FFKYLLTFLITMMILVTANNL), 140–160 (LFIGWEGVGIMSFLLIGWWYG), 171–191 (AILYNRIGDIGFIMAMAWFLF), 211–233 (LPLLGLLLAATGKSAQFGLHPWL), 241–261 (TPVSALLHSSTMVVAGVFLLI), 273–293 (IQSLTLCLGAITTLFTAICAL), 301–320 (IIAFSTSSQLGLMIVTIGIN), 325–347 (AFLHICTHAFFKAMLFMCSGSII), 366–386 (MPFTTTSLIIGSLALTGMPFL), 413–433 (LIATSLTAVYSTRIIFFALLG), 457–477 (LLIGSIFAGFFISNNIYPTTI), 488–508 (LTALTVTILGFTLALELSLIT), and 584–604 (IKLYFLSFLITLTLSMLLFNL).

This sequence belongs to the complex I subunit 5 family. As to quaternary structure, core subunit of respiratory chain NADH dehydrogenase (Complex I) which is composed of 45 different subunits.

The protein resides in the mitochondrion inner membrane. It catalyses the reaction a ubiquinone + NADH + 5 H(+)(in) = a ubiquinol + NAD(+) + 4 H(+)(out). Functionally, core subunit of the mitochondrial membrane respiratory chain NADH dehydrogenase (Complex I) which catalyzes electron transfer from NADH through the respiratory chain, using ubiquinone as an electron acceptor. Essential for the catalytic activity and assembly of complex I. This chain is NADH-ubiquinone oxidoreductase chain 5 (MT-ND5), found in Equus asinus (Donkey).